The chain runs to 735 residues: Non-structural protein 1 (735 aa).

3 disordered regions span residues 18 to 50, 138 to 170, and 218 to 290; these read YASTPVRADASPTTNPPPTAAPASLTSTDSHTM, PEPEETTRQWGDSPEAELANEGYGNDEIDNTPQ, and TSIP…SPMY. Over residues 38–47 the composition is skewed to low complexity; the sequence is APASLTSTDS. The span at 218-234 shows a compositional bias: low complexity; the sequence is TSIPACSPAPSSLPSIL. The span at 235–247 shows a compositional bias: polar residues; the sequence is TMQTRPPSPSSKS. Residues 254–274 are compositionally biased toward basic and acidic residues; that stretch reads LPERRPTRRPEHIANDEDYNR.

The protein belongs to the aquareoviridae NS1 protein family.

In terms of biological role, non-structural protein with ssRNA-binding activity. Is probably involved in the formation of viral inclusions, where the assembly of cores and the replication of viral RNA are thought to occur. The sequence is that of Non-structural protein 1 (S4) from Ctenopharyngodon idella (Grass carp).